The chain runs to 303 residues: Glutaminase (303 aa).

Residues S63, N113, E157, N164, Y188, Y239, and V257 each contribute to the substrate site.

It belongs to the glutaminase family. In terms of assembly, homotetramer.

It catalyses the reaction L-glutamine + H2O = L-glutamate + NH4(+). The chain is Glutaminase from Saccharopolyspora erythraea (strain ATCC 11635 / DSM 40517 / JCM 4748 / NBRC 13426 / NCIMB 8594 / NRRL 2338).